A 592-amino-acid polypeptide reads, in one-letter code: Aspartate--tRNA ligase (592 aa).

An L-aspartate-binding site is contributed by glutamate 176. An aspartate region spans residues 200 to 203 (QIFK). An L-aspartate-binding site is contributed by arginine 222. ATP-binding positions include 222 to 224 (RDE) and glutamine 231. Residue histidine 450 participates in L-aspartate binding. Residue glutamate 484 participates in ATP binding. Residue arginine 491 participates in L-aspartate binding. 536-539 (GLDR) is a binding site for ATP.

It belongs to the class-II aminoacyl-tRNA synthetase family. Type 1 subfamily. As to quaternary structure, homodimer.

It localises to the cytoplasm. It carries out the reaction tRNA(Asp) + L-aspartate + ATP = L-aspartyl-tRNA(Asp) + AMP + diphosphate. Its function is as follows. Catalyzes the attachment of L-aspartate to tRNA(Asp) in a two-step reaction: L-aspartate is first activated by ATP to form Asp-AMP and then transferred to the acceptor end of tRNA(Asp). In Macrococcus caseolyticus (strain JCSC5402) (Macrococcoides caseolyticum), this protein is Aspartate--tRNA ligase.